The following is a 137-amino-acid chain: ATP synthase epsilon chain (137 aa).

The protein belongs to the ATPase epsilon chain family. In terms of assembly, F-type ATPases have 2 components, CF(1) - the catalytic core - and CF(0) - the membrane proton channel. CF(1) has five subunits: alpha(3), beta(3), gamma(1), delta(1), epsilon(1). CF(0) has three main subunits: a, b and c.

The protein localises to the cell inner membrane. Produces ATP from ADP in the presence of a proton gradient across the membrane. The protein is ATP synthase epsilon chain of Magnetococcus marinus (strain ATCC BAA-1437 / JCM 17883 / MC-1).